The chain runs to 2616 residues: Serine protease ndl (2616 aa).

The N-terminal stretch at 1-43 is a signal peptide; the sequence is MNYNMDEMEATRLLRHPRRWWSIGFGKRIVAISILVIIVLLFS. A phosphoserine mark is found at Ser-215 and Ser-220. A WIID 1 repeat occupies 261 to 269; it reads ISWIIDGHD. An N-linked (GlcNAc...) asparagine glycan is attached at Asn-291. The WIID 2 repeat unit spans residues 320–328; it reads ISWILDHFD. The N-linked (GlcNAc...) asparagine glycan is linked to Asn-347. The interval 352–375 is disordered; sequence SASSEPIVDTENTNSDHVPTTENG. An N-linked (GlcNAc...) asparagine glycan is attached at Asn-379. The WIID 3 repeat unit spans residues 399–407; the sequence is FDWILDGEE. Asn-417 is a glycosylation site (N-linked (GlcNAc...) asparagine). WIID repeat units lie at residues 446–454 and 477–485; these read FDWIIDGRE and FDWIIDGEE. Asn-492 and Asn-515 each carry an N-linked (GlcNAc...) asparagine glycan. The stretch at 528 to 536 is one WIID 6 repeat; sequence FDWIIDGGE. Over residues 537–547 the composition is skewed to low complexity; the sequence is SSGEVSTSSTS. Residues 537-574 are disordered; it reads SSGEVSTSSTSQPKLTTREAISNPESPRSSHPLDNPTS. Positions 548–565 are enriched in polar residues; the sequence is QPKLTTREAISNPESPRS. Ser-574 and Ser-581 each carry phosphoserine. Asn-598 carries an N-linked (GlcNAc...) asparagine glycan. Ser-794 carries O-linked (Xyl...) (glycosaminoglycan) serine glycosylation. The interval 798–817 is disordered; sequence GQGANIFSKNASPQKPTNGQ. The span at 804–817 shows a compositional bias: polar residues; sequence FSKNASPQKPTNGQ. Asn-827 carries an N-linked (GlcNAc...) asparagine glycan. An O-linked (Xyl...) (glycosaminoglycan) serine glycan is attached at Ser-829. An N-linked (GlcNAc...) asparagine glycan is attached at Asn-861. LDL-receptor class A domains are found at residues 889-929 and 955-1006; these read SRCP…ACTC and FGCE…QCSM. Disulfide bonds link Cys-891/Cys-905, Cys-899/Cys-918, and Cys-912/Cys-927. Residues 929 to 956 enclose the LDL-receptor class A 2; truncated domain; it reads CADRVDEERLCDGYEDCPMGEDELGCFG. Intrachain disulfides connect Cys-957-Cys-982, Cys-964-Cys-995, and Cys-989-Cys-1004. Asn-975 carries an N-linked (GlcNAc...) asparagine glycan. The Cell attachment site motif lies at 1031–1033; sequence RGD. Asn-1064 carries N-linked (GlcNAc...) asparagine glycosylation. A phosphoserine mark is found at Ser-1134 and Ser-1136. A Peptidase S1 1 domain is found at 1145–1383; sequence IVGGSYTSAL…YLDWLEMATT (239 aa). A disulfide bond links Cys-1170 and Cys-1186. Residues His-1185 and Asp-1233 each act as charge relay system in the active site. 6 cysteine pairs are disulfide-bonded: Cys-1276/Cys-1338, Cys-1305/Cys-1317, Cys-1328/Cys-1359, Cys-1396/Cys-1408, Cys-1401/Cys-1421, and Cys-1415/Cys-1430. Ser-1332 acts as the Charge relay system in catalysis. In terms of domain architecture, LDL-receptor class A 4 spans 1394–1432; that stretch reads QLCPGFICVWGGKRCIAKRQRCDRNVDCLGGEDEVGCTY. Asn-1445 carries N-linked (GlcNAc...) asparagine glycosylation. 2 disordered regions span residues 1530–1557 and 1683–1704; these read FTVSDSATSPSTLLPTTTNPSTWLPSTN and PTTTTESAKTTTTHSSSTHSEK. Composition is skewed to low complexity over residues 1537 to 1557 and 1683 to 1700; these read TSPSTLLPTTTNPSTWLPSTN and PTTTTESAKTTTTHSSST. One can recognise an LDL-receptor class A 5; truncated domain in the interval 1713 to 1743; it reads FVCKKMSQIVDIMMRCDRKVDCEDGTDELDC. 6 disulfide bridges follow: Cys-1728/Cys-1745, Cys-1734/Cys-1764, Cys-1758/Cys-1773, Cys-1776/Cys-1789, Cys-1783/Cys-1802, and Cys-1796/Cys-1811. Positions 1745–1775 constitute an LDL-receptor class A 6; truncated domain; the sequence is CKDYLKGSLKGLICDGKADCEDLTDEQNCVE. The LDL-receptor class A 7 domain maps to 1774-1813; that stretch reads VECQSNEFRCPLSKTCLPLSSRCDNKVDCKFKEDEKDCFA. N-linked (GlcNAc...) asparagine glycans are attached at residues Asn-1878, Asn-1956, and Asn-2023. The 275-residue stretch at 2027-2301 folds into the Peptidase S1 2 domain; the sequence is LVNEQLHEAI…LQDIIDKPSC (275 aa). A disulfide bridge connects residues Cys-2055 and Cys-2071. N-linked (GlcNAc...) asparagine glycans are attached at residues Asn-2144, Asn-2173, Asn-2197, Asn-2237, and Asn-2269. Cys-2177 and Cys-2230 are oxidised to a cystine. 3 LDL-receptor class A domains span residues 2308 to 2346, 2349 to 2389, and 2419 to 2459; these read PDCSTHRCPLGTCLPQAAMCNGRSDCHDGSDEEETKCRQ, QQCA…ICSC, and CNCT…YCFG. 6 disulfides stabilise this stretch: Cys-2310-Cys-2320, Cys-2315-Cys-2333, Cys-2327-Cys-2344, Cys-2351-Cys-2364, Cys-2358-Cys-2377, and Cys-2371-Cys-2387. Residues 2387–2419 enclose the LDL-receptor class A 10; truncated domain; it reads CSCFTYLQATDPSKICDGKRNCWDKSDESSVLC. The N-linked (GlcNAc...) asparagine glycan is linked to Asn-2420. Disulfide bonds link Cys-2421-Cys-2435, Cys-2428-Cys-2448, and Cys-2442-Cys-2457. Residues Asn-2556 and Asn-2601 are each glycosylated (N-linked (GlcNAc...) asparagine).

Belongs to the peptidase S1 family. Post-translationally, requires cleavage for activation (presumably). As to expression, follicle.

The protein localises to the secreted. Its subcellular location is the extracellular space. It localises to the extracellular matrix. Its function is as follows. Component of the extracellular signaling pathway that establishes the dorsal-ventral pathway of the embryo. A protease cascade involving ndl, gd, snk and ea results in activation of the spz Toll receptor ligand; acts upstream of gd, snk and ea and is required for proteolytic processing of gd. Activation of ea requires activation of the ndl-gd-snk protease cascade and sulfation of a vitelline membrane component by pip. Localized activation of the Toll receptor in the ventral region of the embryo defines cell identities along the dorsal-ventral continuum. This is Serine protease ndl from Drosophila melanogaster (Fruit fly).